A 269-amino-acid polypeptide reads, in one-letter code: Diadenylate cyclase (269 aa).

Positions 109-266 constitute a DAC domain; that stretch reads RSGIYDLFAN…GGKMILEIDP (158 aa).

It belongs to the adenylate cyclase family. DacZ subfamily. Mn(2+) is required as a cofactor.

The enzyme catalyses 2 ATP = 3',3'-c-di-AMP + 2 diphosphate. In terms of biological role, diadenylate cyclase that catalyzes the condensation of 2 ATP molecules into cyclic di-AMP (c-di-AMP). c-di-AMP is a second messenger for intracellular signal transduction involved in the control of important regulatory processes such as osmoregulation. Is essential for H.volcanii. Overexpression of DacZ leads to cell death, suggesting the need for tight regulation of c-di-AMP levels. Cannot use GTP as substrate. This chain is Diadenylate cyclase, found in Haloferax volcanii (strain ATCC 29605 / DSM 3757 / JCM 8879 / NBRC 14742 / NCIMB 2012 / VKM B-1768 / DS2) (Halobacterium volcanii).